We begin with the raw amino-acid sequence, 193 residues long: MYHDLIRSELNEAADTLANFLKDDSNIDAIQRAAILLADSFKAGGKVLSCGNGGSHCDAMHFAEELTGRYRENRPGYPAIAISDVSHLSCVSNDFGYDYVFSRYVEAVGREGDVLLGISTSGNSGNIIKAIEAARAKGMKVITLTGKDGGKMAGSADIEIRVPHFGYADRIQEIHIKVIHILIQLIEKEMVKA.

Positions 37–193 (LADSFKAGGK…QLIEKEMVKA (157 aa)) constitute an SIS domain. 52 to 54 (NGG) serves as a coordination point for substrate. Residues His61 and Glu65 each coordinate Zn(2+). Substrate-binding positions include Glu65, 93–94 (ND), 119–121 (STS), Ser124, and Gln172. Residues Gln172 and His180 each coordinate Zn(2+).

Belongs to the SIS family. GmhA subfamily. In terms of assembly, homotetramer. Zn(2+) serves as cofactor.

The protein localises to the cytoplasm. The enzyme catalyses 2 D-sedoheptulose 7-phosphate = D-glycero-alpha-D-manno-heptose 7-phosphate + D-glycero-beta-D-manno-heptose 7-phosphate. It functions in the pathway carbohydrate biosynthesis; D-glycero-D-manno-heptose 7-phosphate biosynthesis; D-glycero-alpha-D-manno-heptose 7-phosphate and D-glycero-beta-D-manno-heptose 7-phosphate from sedoheptulose 7-phosphate: step 1/1. Catalyzes the isomerization of sedoheptulose 7-phosphate in D-glycero-D-manno-heptose 7-phosphate. The chain is Phosphoheptose isomerase from Yersinia pseudotuberculosis serotype O:1b (strain IP 31758).